Reading from the N-terminus, the 1300-residue chain is Serine protease EspP (1300 aa).

The N-terminal stretch at 1 to 55 is a signal peptide; sequence MNKIYSLKYSHITGGLIAVSELSGRVSSRATGKKKHKRILALCFLGLLQSSYSFA. Residues 57–311 enclose the Peptidase S6 domain; that stretch reads QMDISNFYIR…NQTTIDNLKN (255 aa). Catalysis depends on charge relay system residues histidine 127, aspartate 156, and serine 263. One can recognise an Autotransporter domain in the interval 1034–1300; the sequence is DINGEAGAWA…AVNANFRYSF (267 aa).

Post-translationally, cleaved to release the mature protein from the outer membrane.

The protein localises to the periplasm. It localises to the secreted. Its subcellular location is the cell surface. The protein resides in the cell outer membrane. Its activity is regulated as follows. Inhibition of cytotoxic activity by phenylmethylsulfonyl fluoride. In terms of biological role, serine protease capable of cleaving pepsin A and human coagulation factor V, which may contribute to the mucosal hemorrhage observed in hemorrhagic colitis. The chain is Serine protease EspP (espP) from Escherichia coli O157:H7.